Consider the following 63-residue polypeptide: Cecropin-C (63 aa).

The N-terminal stretch at 1-23 is a signal peptide; the sequence is MNFNKIFVFVALILAISLGQSEA. Arginine amide is present on Arg62.

Belongs to the cecropin family.

The protein resides in the secreted. Functionally, cecropins have lytic and antibacterial activity against several Gram-positive and Gram-negative bacteria. This is Cecropin-C (CecC) from Drosophila orena (Fruit fly).